Reading from the N-terminus, the 732-residue chain is Acylamino-acid-releasing enzyme (732 aa).

M1 bears the N-acetylmethionine mark. Position 187 is a phosphoserine (S187). Active-site charge relay system residues include S587, D675, and H707.

The protein belongs to the peptidase S9C family. In terms of assembly, homotetramer. In terms of tissue distribution, expressed in the liver (at protein level).

The protein localises to the cytoplasm. It catalyses the reaction Cleavage of an N-acetyl or N-formyl amino acid from the N-terminus of a polypeptide.. Homotetramerization is required for activity. Tetramerization results in the formation of a gated channel which is involved in substrate selection and substrate access to the catalytic sites. Functionally, this enzyme catalyzes the hydrolysis of the N-terminal peptide bond of an N-acetylated peptide to generate an N-acetylated amino acid and a peptide with a free N-terminus. It preferentially cleaves off Ac-Ala, Ac-Met and Ac-Ser. Also, involved in the degradation of oxidized and glycated proteins. The sequence is that of Acylamino-acid-releasing enzyme (APEH) from Sus scrofa (Pig).